The following is a 452-amino-acid chain: UPF0210 protein Csac_1314 (452 aa).

This sequence belongs to the UPF0210 family. Homodimer.

The chain is UPF0210 protein Csac_1314 from Caldicellulosiruptor saccharolyticus (strain ATCC 43494 / DSM 8903 / Tp8T 6331).